The primary structure comprises 630 residues: MTVARNRAGAGPGKGSPISSFADKTFTDPARIRNFCIIAHIDHGKSTLADRMLQLTGVVEERQMRAQYLDRMDIERERGITIKAQNVRLPWKVGDEEFVIHLIDTPGHVDFTYEVSRALEACEGAVLLVDAAQGIEAQTLANLYLAMEKDLTIIPVLNKIDLPAADPDRYAEEIAHITGCEPGDVLRVSGKTGIGVKELLDEVVRQVPAPVGDPDGPARAMIFDSVYDAYRGVVTYVRVVDGRISPREKITMMSTGTTHDLIEVGIISPEPKASIGLGVGEVGYLITGVKDVRQSRVGDTVTAARGGATEPLVGYRDPKPMVYSGLYPLDGSDYPVLRDALDKLRLNDAALAYEPETSVALGFGFRCGFLGLLHMEITRDRLEREFGLELISTSPNVVYRVVMEDGSEHVVTNPSYWPEGKIREVYEPMVKCTIIAPSEFIGAIMELCQNRRGELGGMDYLSETRVELRYEMPMGEIMFDFFDALKSRTKGYASLDYEESGEQQADLVKVDILLQGEAVDAFSSIVHRSAAGAYGGRMTSKLRELIPRQQFEVPIQAAIGSKIISRENIRAIRKDVLAKCYGGDISRKRKLLEKQKEGKKRMKTIGRVEVPQEAFVAALSSESVGDKPKK.

Residues 1–22 (MTVARNRAGAGPGKGSPISSFA) form a disordered region. Residues 30–211 (ARIRNFCIIA…EVVRQVPAPV (182 aa)) form the tr-type G domain. GTP is bound by residues 42 to 47 (DHGKST) and 158 to 161 (NKID).

It belongs to the TRAFAC class translation factor GTPase superfamily. Classic translation factor GTPase family. LepA subfamily.

It localises to the cell membrane. It carries out the reaction GTP + H2O = GDP + phosphate + H(+). In terms of biological role, required for accurate and efficient protein synthesis under certain stress conditions. May act as a fidelity factor of the translation reaction, by catalyzing a one-codon backward translocation of tRNAs on improperly translocated ribosomes. Back-translocation proceeds from a post-translocation (POST) complex to a pre-translocation (PRE) complex, thus giving elongation factor G a second chance to translocate the tRNAs correctly. Binds to ribosomes in a GTP-dependent manner. This chain is Elongation factor 4, found in Rhodococcus jostii (strain RHA1).